We begin with the raw amino-acid sequence, 240 residues long: 2,3,4,5-tetrahydropyridine-2,6-dicarboxylate N-acetyltransferase (240 aa).

The protein belongs to the transferase hexapeptide repeat family. DapH subfamily.

The catalysed reaction is (S)-2,3,4,5-tetrahydrodipicolinate + acetyl-CoA + H2O = L-2-acetamido-6-oxoheptanedioate + CoA. Its pathway is amino-acid biosynthesis; L-lysine biosynthesis via DAP pathway; LL-2,6-diaminopimelate from (S)-tetrahydrodipicolinate (acetylase route): step 1/3. Functionally, catalyzes the transfer of an acetyl group from acetyl-CoA to tetrahydrodipicolinate. The chain is 2,3,4,5-tetrahydropyridine-2,6-dicarboxylate N-acetyltransferase from Bacillus cytotoxicus (strain DSM 22905 / CIP 110041 / 391-98 / NVH 391-98).